A 291-amino-acid polypeptide reads, in one-letter code: Methylsterol monooxygenase 1-3 (291 aa).

A run of 3 helical transmembrane segments spans residues 41 to 61 (TILVLFLVFSLAPFPLVIVEW), 92 to 112 (FLLVVGTLQIVSYPSIQMVGI), and 114 to 134 (SGLPLPSLMEIVAQLVVYFLI). A Fatty acid hydroxylase domain is found at 128 to 263 (LVVYFLIEDY…FTYCDYIYGT (136 aa)). The Histidine box-1 motif lies at 143–147 (HRWMH). The short motif at 156–160 (HRIHH) is the Histidine box-2 element. A helical membrane pass occupies residues 178–198 (ILILGIPTFLGPAIAPGHIMT). Residues 235 to 241 (YHDYHHY) carry the Histidine box-3 motif.

Belongs to the sterol desaturase family. In terms of assembly, interacts with ACBP1. It depends on Fe cation as a cofactor. As to expression, expressed at low levels in leaves, roots, siliques and flowers.

It localises to the endoplasmic reticulum membrane. The catalysed reaction is 4,4-dimethyl-5alpha-cholest-7-en-3beta-ol + 6 Fe(II)-[cytochrome b5] + 3 O2 + 5 H(+) = 4alpha-carboxy-4beta-methyl-5alpha-cholest-7-ene-3beta-ol + 6 Fe(III)-[cytochrome b5] + 4 H2O. The enzyme catalyses 24-methylidenelophenol + 6 Fe(II)-[cytochrome b5] + 3 O2 + 5 H(+) = 4alpha-carboxy-ergosta-7,24(24(1))-dien-3beta-ol + 6 Fe(III)-[cytochrome b5] + 4 H2O. Functionally, non-heme iron oxygenase involved in sterols biosynthesis by catalyzing the removal of the first methyl group at the C-4 position. 4,4-dimethyl-9-beta,19-cyclopropylsterols such as 24-methylenecycloartanol are the preferred substrates. This is Methylsterol monooxygenase 1-3 from Arabidopsis thaliana (Mouse-ear cress).